Here is a 355-residue protein sequence, read N- to C-terminus: MSSHARGKELIPLLSFSHQKKQPNLSISSTTKMNKKNPDQKSDMSSSSSSPKKQTLFISSLIILWYTSNIGVLLLNKFLLSNYGFKFPIFLTMCHMSACAILSYVSIVFLKLVPLQYLKSRSQFLKVATLSIVFCASVVGGNISLRYLPVSFNQAVGATTPFFTALFAYIMTFKREAWVTYGALVPVVTGVVIASGGEPGFHWFGFIMCISATAARAFKSVLQGILLSSEGERLNSMNLMLYMSPIAVIALLPVTIFMEPDVMSVTLTLGRQHKYMYILLLVNSVMAYSANLLNFLVTKHTSALTLQVLGNAKGAVAVVISILLFRNPVTVMGIGGYSITVLGVVAYGETKRRFR.

The interval Gln-19–Pro-51 is disordered. The span at Gln-22 to Lys-32 shows a compositional bias: polar residues. Transmembrane regions (helical) follow at residues Thr-55 to Leu-75, Ile-89 to Phe-109, Phe-124 to Ser-144, Val-150 to Ile-170, Ala-177 to Gly-197, Glu-198 to Phe-218, Leu-239 to Glu-259, Tyr-277 to Val-297, Thr-305 to Phe-325, and Pro-328 to Gly-348.

The protein belongs to the TPT transporter family. TPT (TC 2.A.7.9) subfamily.

The protein localises to the membrane. The polypeptide is Probable sugar phosphate/phosphate translocator At3g10290 (Arabidopsis thaliana (Mouse-ear cress)).